The primary structure comprises 316 residues: 4-hydroxy-3-methylbut-2-enyl diphosphate reductase (316 aa).

Cysteine 12 contacts [4Fe-4S] cluster. (2E)-4-hydroxy-3-methylbut-2-enyl diphosphate is bound by residues histidine 41 and histidine 74. Residues histidine 41 and histidine 74 each contribute to the dimethylallyl diphosphate site. The isopentenyl diphosphate site is built by histidine 41 and histidine 74. Cysteine 96 contacts [4Fe-4S] cluster. Histidine 124 provides a ligand contact to (2E)-4-hydroxy-3-methylbut-2-enyl diphosphate. Residue histidine 124 participates in dimethylallyl diphosphate binding. Histidine 124 is a binding site for isopentenyl diphosphate. Glutamate 126 acts as the Proton donor in catalysis. Residue threonine 169 participates in (2E)-4-hydroxy-3-methylbut-2-enyl diphosphate binding. Cysteine 199 contributes to the [4Fe-4S] cluster binding site. Residues serine 227, serine 228, asparagine 229, and serine 271 each contribute to the (2E)-4-hydroxy-3-methylbut-2-enyl diphosphate site. Dimethylallyl diphosphate is bound by residues serine 227, serine 228, asparagine 229, and serine 271. Isopentenyl diphosphate contacts are provided by serine 227, serine 228, asparagine 229, and serine 271.

This sequence belongs to the IspH family. [4Fe-4S] cluster serves as cofactor.

The catalysed reaction is isopentenyl diphosphate + 2 oxidized [2Fe-2S]-[ferredoxin] + H2O = (2E)-4-hydroxy-3-methylbut-2-enyl diphosphate + 2 reduced [2Fe-2S]-[ferredoxin] + 2 H(+). It carries out the reaction dimethylallyl diphosphate + 2 oxidized [2Fe-2S]-[ferredoxin] + H2O = (2E)-4-hydroxy-3-methylbut-2-enyl diphosphate + 2 reduced [2Fe-2S]-[ferredoxin] + 2 H(+). The protein operates within isoprenoid biosynthesis; dimethylallyl diphosphate biosynthesis; dimethylallyl diphosphate from (2E)-4-hydroxy-3-methylbutenyl diphosphate: step 1/1. Its pathway is isoprenoid biosynthesis; isopentenyl diphosphate biosynthesis via DXP pathway; isopentenyl diphosphate from 1-deoxy-D-xylulose 5-phosphate: step 6/6. Functionally, catalyzes the conversion of 1-hydroxy-2-methyl-2-(E)-butenyl 4-diphosphate (HMBPP) into a mixture of isopentenyl diphosphate (IPP) and dimethylallyl diphosphate (DMAPP). Acts in the terminal step of the DOXP/MEP pathway for isoprenoid precursor biosynthesis. This chain is 4-hydroxy-3-methylbut-2-enyl diphosphate reductase, found in Xylella fastidiosa (strain M23).